The chain runs to 230 residues: Cytidylate kinase (230 aa).

12–20 (GPSGAGKGT) is an ATP binding site.

It belongs to the cytidylate kinase family. Type 1 subfamily.

The protein localises to the cytoplasm. The catalysed reaction is CMP + ATP = CDP + ADP. The enzyme catalyses dCMP + ATP = dCDP + ADP. The chain is Cytidylate kinase from Yersinia enterocolitica serotype O:8 / biotype 1B (strain NCTC 13174 / 8081).